A 197-amino-acid polypeptide reads, in one-letter code: Shikimate kinase (197 aa).

An ATP-binding site is contributed by 14–19 (GSGKST). Ser-18 is a Mg(2+) binding site. Residues Asp-36, Arg-60, and Gly-82 each coordinate substrate. Residue Arg-120 coordinates ATP. Arg-147 contacts substrate.

Belongs to the shikimate kinase family. In terms of assembly, monomer. Mg(2+) serves as cofactor.

The protein resides in the cytoplasm. The enzyme catalyses shikimate + ATP = 3-phosphoshikimate + ADP + H(+). Its pathway is metabolic intermediate biosynthesis; chorismate biosynthesis; chorismate from D-erythrose 4-phosphate and phosphoenolpyruvate: step 5/7. Functionally, catalyzes the specific phosphorylation of the 3-hydroxyl group of shikimic acid using ATP as a cosubstrate. The sequence is that of Shikimate kinase from Prosthecochloris aestuarii (strain DSM 271 / SK 413).